The primary structure comprises 318 residues: Probable dual-specificity RNA methyltransferase RlmN (318 aa).

Glutamate 63 acts as the Proton acceptor in catalysis. Positions 69 to 299 (HDYGRTVCVS…VSLRRELGAD (231 aa)) constitute a Radical SAM core domain. Cysteine 76 and cysteine 304 are disulfide-bonded. 3 residues coordinate [4Fe-4S] cluster: cysteine 83, cysteine 87, and cysteine 90. Residues 130-131 (GE), serine 162, 185-187 (SLH), and asparagine 261 contribute to the S-adenosyl-L-methionine site. The active-site S-methylcysteine intermediate is cysteine 304.

The protein belongs to the radical SAM superfamily. RlmN family. The cofactor is [4Fe-4S] cluster.

The protein resides in the cytoplasm. The catalysed reaction is adenosine(2503) in 23S rRNA + 2 reduced [2Fe-2S]-[ferredoxin] + 2 S-adenosyl-L-methionine = 2-methyladenosine(2503) in 23S rRNA + 5'-deoxyadenosine + L-methionine + 2 oxidized [2Fe-2S]-[ferredoxin] + S-adenosyl-L-homocysteine. It catalyses the reaction adenosine(37) in tRNA + 2 reduced [2Fe-2S]-[ferredoxin] + 2 S-adenosyl-L-methionine = 2-methyladenosine(37) in tRNA + 5'-deoxyadenosine + L-methionine + 2 oxidized [2Fe-2S]-[ferredoxin] + S-adenosyl-L-homocysteine. Its function is as follows. Specifically methylates position 2 of adenine 2503 in 23S rRNA and position 2 of adenine 37 in tRNAs. The polypeptide is Probable dual-specificity RNA methyltransferase RlmN (Desulforudis audaxviator (strain MP104C)).